A 298-amino-acid chain; its full sequence is ATP phosphoribosyltransferase (298 aa).

This sequence belongs to the ATP phosphoribosyltransferase family. Long subfamily. Mg(2+) serves as cofactor.

The protein resides in the cytoplasm. It carries out the reaction 1-(5-phospho-beta-D-ribosyl)-ATP + diphosphate = 5-phospho-alpha-D-ribose 1-diphosphate + ATP. It participates in amino-acid biosynthesis; L-histidine biosynthesis; L-histidine from 5-phospho-alpha-D-ribose 1-diphosphate: step 1/9. Its activity is regulated as follows. Feedback inhibited by histidine. Its function is as follows. Catalyzes the condensation of ATP and 5-phosphoribose 1-diphosphate to form N'-(5'-phosphoribosyl)-ATP (PR-ATP). Has a crucial role in the pathway because the rate of histidine biosynthesis seems to be controlled primarily by regulation of HisG enzymatic activity. This Tolumonas auensis (strain DSM 9187 / NBRC 110442 / TA 4) protein is ATP phosphoribosyltransferase.